The sequence spans 331 residues: E3 ubiquitin-protein ligase Siah2 (331 aa).

A disordered region spans residues 1-26 (MSRPSSAGGAAGGLGAGKAGGSKHGG). Residues 9 to 26 (GAAGGLGAGKAGGSKHGG) are compositionally biased toward gly residues. Residues 89 to 124 (CPVCFDYVLPPILQCQAGHLVCNQCRQKLSCCPTCR) form an RING-type zinc finger. The segment at 139–331 (VASTLPFPCK…LGINVTISMC (193 aa)) is SBD. An SIAH-type zinc finger spans residues 142 to 202 (TLPFPCKYSS…VMPHLMHAHK (61 aa)). Positions 147, 154, 166, 170, 177, 184, 196, and 201 each coordinate Zn(2+).

It belongs to the SINA (Seven in absentia) family. As to quaternary structure, homodimer. In embryos it is expressed in all blastomeres starting at the mid-blastulla. After 20 somite stage, it is expressed mainly in the posterior part. Expressed in brain, including the eye, the cranial cavity, otic vesicle, optic chiasm and in the gut.

It catalyses the reaction S-ubiquitinyl-[E2 ubiquitin-conjugating enzyme]-L-cysteine + [acceptor protein]-L-lysine = [E2 ubiquitin-conjugating enzyme]-L-cysteine + N(6)-ubiquitinyl-[acceptor protein]-L-lysine.. The protein operates within protein modification; protein ubiquitination. In terms of biological role, E3 ubiquitin-protein ligase that mediates ubiquitination and subsequent proteasomal degradation of target proteins. E3 ubiquitin ligases accept ubiquitin from an E2 ubiquitin-conjugating enzyme in the form of a thioester and then directly transfers the ubiquitin to targeted substrates. It probably triggers the ubiquitin-mediated degradation of different substrates. Induces cellular growth arrest by inhibiting the G2/M transition. May play a role in the regulation of the cellular clock function. The protein is E3 ubiquitin-protein ligase Siah2 (siah2l) of Danio rerio (Zebrafish).